A 145-amino-acid polypeptide reads, in one-letter code: MAEKAIESVQCFGRKKTAVAVTHCKRGRGLIKINGCPIELVEPEILRFKAVEPILLLGRQRFTGVDMRIRVKGGGHTSQIYAIRQSIAKALVAFYQKYVDEQSKKEIKDILVGYDRTLLVADPRRCEPKKFGGRGARARFQKSYR.

It belongs to the universal ribosomal protein uS9 family.

It localises to the cytoplasm. The protein is Small ribosomal subunit protein uS9 (RPS16) of Gossypium hirsutum (Upland cotton).